The primary structure comprises 397 residues: MHNLVILGASGSIGQSTLKVLRRNPGRWQVLALTAARSVDAMVRDCLEFSPRFAVMVDEAAATALAGQLKTHGSATRVLSGQAALCEVAAHPDAHSVMAAIVGAAGLAPTMAAVRAGKRILLANKEALVMSGAFFMEAVREHGAELLPIDSEHNAIFQCLPEAIQRQPGYCDLAGAGISRILLTGSGGPFRYTDINALAQVTPAQAIAHPNWSMGAKISVDSATMINKGLEYIEARWLFNAAPEQIQVVIHPQSVIHSMVQYKDGSVMAQLGNPDMCTPIAHALAYPARVESGVEPLDFFSVGEFSFIRPDYERYPCLALAMSACQQGQAATTALNAANEEAVAAFLAERIGFMDIARVNEATMVALGSSPVGSLDDLIALDGAARARAHNLIEELS.

Residues S10, G11, S12, I13, A36, R37, and N124 each coordinate NADPH. K125 lines the 1-deoxy-D-xylulose 5-phosphate pocket. E126 lines the NADPH pocket. Position 150 (D150) interacts with Mn(2+). 1-deoxy-D-xylulose 5-phosphate contacts are provided by S151, E152, S186, and H209. E152 lines the Mn(2+) pocket. Residue G215 participates in NADPH binding. The 1-deoxy-D-xylulose 5-phosphate site is built by S222, N227, K228, and E231. E231 contacts Mn(2+).

It belongs to the DXR family. It depends on Mg(2+) as a cofactor. Requires Mn(2+) as cofactor.

It catalyses the reaction 2-C-methyl-D-erythritol 4-phosphate + NADP(+) = 1-deoxy-D-xylulose 5-phosphate + NADPH + H(+). The protein operates within isoprenoid biosynthesis; isopentenyl diphosphate biosynthesis via DXP pathway; isopentenyl diphosphate from 1-deoxy-D-xylulose 5-phosphate: step 1/6. In terms of biological role, catalyzes the NADPH-dependent rearrangement and reduction of 1-deoxy-D-xylulose-5-phosphate (DXP) to 2-C-methyl-D-erythritol 4-phosphate (MEP). The sequence is that of 1-deoxy-D-xylulose 5-phosphate reductoisomerase from Aeromonas salmonicida (strain A449).